The following is a 310-amino-acid chain: MKIVACNSNRPLAEAVAAALNLPLTKASVRRFADMEVFVEIHENVRGEDVFVIQSTSYPANDNLMELLITLDALRRGSARRVTAVIPYFGYARQDRKSGPRTPISAKLVANLITEAGANRVLTMDLHAGQIQGFFDIPVDNLYAAPLFARDIAERFHGRDIMIVSPDVGGVLRARAIATRLNTDLAIIDKRRERAGVSEVMNVIGDVEGRDCILIDDICDSGGTLCNAAAALIANGAASASVYTTHGVLSGGAVARIASSPISMMTITDSILATEAVRLAQNVRQLTIAPLLAEAMRRISDESSVSSLFD.

ATP is bound by residues 34–36 (DME) and 93–94 (RQ). The Mg(2+) site is built by His127 and Asp167. The active site involves Lys190. Residues Arg192, Asp216, and 220–224 (DSGGT) contribute to the D-ribose 5-phosphate site.

The protein belongs to the ribose-phosphate pyrophosphokinase family. Class I subfamily. Homohexamer. The cofactor is Mg(2+).

The protein localises to the cytoplasm. It carries out the reaction D-ribose 5-phosphate + ATP = 5-phospho-alpha-D-ribose 1-diphosphate + AMP + H(+). It participates in metabolic intermediate biosynthesis; 5-phospho-alpha-D-ribose 1-diphosphate biosynthesis; 5-phospho-alpha-D-ribose 1-diphosphate from D-ribose 5-phosphate (route I): step 1/1. Functionally, involved in the biosynthesis of the central metabolite phospho-alpha-D-ribosyl-1-pyrophosphate (PRPP) via the transfer of pyrophosphoryl group from ATP to 1-hydroxyl of ribose-5-phosphate (Rib-5-P). This chain is Ribose-phosphate pyrophosphokinase, found in Granulibacter bethesdensis (strain ATCC BAA-1260 / CGDNIH1).